Here is a 615-residue protein sequence, read N- to C-terminus: Chaperone protein DnaK (615 aa).

Threonine 174 is modified (phosphothreonine; by autocatalysis). The segment at 581–615 (QAAPKDGAEGDAKSADDNTVDGDFEEVDPNKDDKK) is disordered. The span at 586-596 (DGAEGDAKSAD) shows a compositional bias: basic and acidic residues. Residues 598 to 607 (NTVDGDFEEV) are compositionally biased toward acidic residues.

Belongs to the heat shock protein 70 family.

Acts as a chaperone. The sequence is that of Chaperone protein DnaK from Leuconostoc mesenteroides subsp. mesenteroides (strain ATCC 8293 / DSM 20343 / BCRC 11652 / CCM 1803 / JCM 6124 / NCDO 523 / NBRC 100496 / NCIMB 8023 / NCTC 12954 / NRRL B-1118 / 37Y).